Here is a 1679-residue protein sequence, read N- to C-terminus: Furin-like protease 2 (1679 aa).

Over residues 1-10 (MSNTTRSSRV) the composition is skewed to polar residues. The interval 1 to 42 (MSNTTRSSRVTIGRIGTTPQITDPWSSGLEKQRPSRCGGPKS) is disordered. 3 N-linked (GlcNAc...) asparagine glycosylation sites follow: asparagine 3, asparagine 109, and asparagine 130. Residues 139–164 (VSSLHSSRRTNPPSSSSSSSSNVDVD) are disordered. Low complexity predominate over residues 147-160 (RTNPPSSSSSSSSN). The N-linked (GlcNAc...) asparagine glycan is linked to asparagine 205. In terms of domain architecture, Peptidase S8 spans 383–705 (QWYLNGGAKD…YGLMDAGAMV (323 aa)). Aspartate 417 serves as the catalytic Charge relay system. A disordered region spans residues 424–456 (HPDLAQNYDPEASFDINGNDSDPTPQDNGDNKH). Residues 439 to 451 (INGNDSDPTPQDN) are compositionally biased toward polar residues. N-linked (GlcNAc...) asparagine glycosylation is present at asparagine 442. The active-site Charge relay system is the histidine 456. 2 disulfides stabilise this stretch: cysteine 473-cysteine 629 and cysteine 565-cysteine 595. N-linked (GlcNAc...) asparagine glycosylation is present at asparagine 480. Serine 637 functions as the Charge relay system in the catalytic mechanism. One can recognise a P/Homo B domain in the interval 714–852 (VPPQHICKSR…QLIFYGTSTQ (139 aa)). An intrachain disulfide couples cysteine 720 to cysteine 748. Asparagine 927 is a glycosylation site (N-linked (GlcNAc...) asparagine). FU repeat units follow at residues 961–1006 (KKIL…RSFP), 1009–1056 (VGIC…GYFE), 1060–1104 (NRTC…DTYE), 1107–1152 (DNKC…GFYA), 1156–1204 (RLEC…SEFY), 1208–1253 (EGQC…GFFV), 1256–1299 (GSLC…GYYS), 1301–1346 (RGIC…GFYK), 1348–1393 (DFGC…QYYD), and 1396–1443 (SATC…QTLA). Asparagine 1060 carries N-linked (GlcNAc...) asparagine glycosylation. Asparagine 1181 carries an N-linked (GlcNAc...) asparagine glycan. Residues asparagine 1274 and asparagine 1277 are each glycosylated (N-linked (GlcNAc...) asparagine). Residue asparagine 1439 is glycosylated (N-linked (GlcNAc...) asparagine). Residues 1512 to 1532 (AIAVAICLLIITIFSIIFAVL) form a helical membrane-spanning segment. At 1533–1679 (QRNSNHVSRN…STTSRTNIRS (147 aa)) the chain is on the cytoplasmic side. The disordered stretch occupies residues 1660–1679 (TNAERKNHPSSTTSRTNIRS). Polar residues predominate over residues 1668–1679 (PSSTTSRTNIRS).

Belongs to the peptidase S8 family. Furin subfamily. Ca(2+) is required as a cofactor. Transient expression in a subset of central nervous system neurons during embryonic stages 12-13. Expression in developing tracheal tree from stage 13 to end of embryonic development.

The protein localises to the membrane. The catalysed reaction is Release of mature proteins from their proproteins by cleavage of -Arg-Xaa-Yaa-Arg-|-Zaa- bonds, where Xaa can be any amino acid and Yaa is Arg or Lys. Releases albumin, complement component C3 and von Willebrand factor from their respective precursors.. In terms of biological role, furin is likely to represent the ubiquitous endoprotease activity within constitutive secretory pathways and capable of cleavage at the RX(K/R)R consensus motif. This chain is Furin-like protease 2 (Fur2), found in Drosophila melanogaster (Fruit fly).